The sequence spans 197 residues: Ribosome maturation factor RimP (197 aa).

This sequence belongs to the RimP family.

The protein localises to the cytoplasm. Required for maturation of 30S ribosomal subunits. The sequence is that of Ribosome maturation factor RimP from Acidovorax sp. (strain JS42).